Consider the following 190-residue polypeptide: Dense granule protein 1 (190 aa).

An N-terminal signal peptide occupies residues 1–24 (MVRVSAIVGAAASVFVCLSAGAYA). Asn30 is a glycosylation site (N-linked (GlcNAc...) asparagine).

It localises to the secreted. The sequence is that of Dense granule protein 1 (GRA1) from Toxoplasma gondii.